Here is a 397-residue protein sequence, read N- to C-terminus: Probable peptidoglycan glycosyltransferase FtsW (397 aa).

The Cytoplasmic segment spans residues Met1–Ala26. A helical membrane pass occupies residues Phe27–Val47. The Periplasmic portion of the chain corresponds to Thr48–Gln69. A helical transmembrane segment spans residues Gly70–Phe90. Topologically, residues Tyr91–Lys96 are cytoplasmic. The chain crosses the membrane as a helical span at residues Phe97 to Val117. Residues Val118–Asn126 are Periplasmic-facing. A helical membrane pass occupies residues Leu127–Ala147. Residues Ala148 to His159 lie on the Cytoplasmic side of the membrane. The helical transmembrane segment at Ser160–Leu180 threads the bilayer. The Periplasmic portion of the chain corresponds to Gln181 to Gly185. Residues Thr186–Trp206 traverse the membrane as a helical segment. Residue Arg207 is a topological domain, cytoplasmic. A helical membrane pass occupies residues Leu208–Tyr228. The Periplasmic segment spans residues Arg229–Gly294. The chain crosses the membrane as a helical span at residues Leu295–Ile315. Over Gly316–Ser328 the chain is Cytoplasmic. The chain crosses the membrane as a helical span at residues Leu329–Thr349. The Periplasmic segment spans residues Thr350–Thr359. Residues Leu360–Leu380 form a helical membrane-spanning segment. Residues Ala381–Ile397 are Cytoplasmic-facing.

Belongs to the SEDS family. FtsW subfamily.

Its subcellular location is the cell inner membrane. It catalyses the reaction [GlcNAc-(1-&gt;4)-Mur2Ac(oyl-L-Ala-gamma-D-Glu-L-Lys-D-Ala-D-Ala)](n)-di-trans,octa-cis-undecaprenyl diphosphate + beta-D-GlcNAc-(1-&gt;4)-Mur2Ac(oyl-L-Ala-gamma-D-Glu-L-Lys-D-Ala-D-Ala)-di-trans,octa-cis-undecaprenyl diphosphate = [GlcNAc-(1-&gt;4)-Mur2Ac(oyl-L-Ala-gamma-D-Glu-L-Lys-D-Ala-D-Ala)](n+1)-di-trans,octa-cis-undecaprenyl diphosphate + di-trans,octa-cis-undecaprenyl diphosphate + H(+). The protein operates within cell wall biogenesis; peptidoglycan biosynthesis. In terms of biological role, peptidoglycan polymerase that is essential for cell division. In Dichelobacter nodosus (strain VCS1703A), this protein is Probable peptidoglycan glycosyltransferase FtsW.